The following is an 808-amino-acid chain: Probable mannosyl-oligosaccharide glucosidase (808 aa).

At 1–11 (MVSDMLGGNKR) the chain is on the cytoplasmic side. A helical; Signal-anchor for type II membrane protein membrane pass occupies residues 12–31 (WILFGLLSFLLNCVLVSCSV). Topologically, residues 32–808 (EDIEKAANDS…LVVNIMSENY (777 aa)) are lumenal. The N-linked (GlcNAc...) asparagine glycan is linked to Asn-39. Asp-580 functions as the Proton donor in the catalytic mechanism. Glu-778 serves as the catalytic Proton acceptor.

It belongs to the glycosyl hydrolase 63 family.

It is found in the endoplasmic reticulum membrane. The enzyme catalyses N(4)-(alpha-D-Glc-(1-&gt;2)-alpha-D-Glc-(1-&gt;3)-alpha-D-Glc-(1-&gt;3)-alpha-D-Man-(1-&gt;2)-alpha-D-Man-(1-&gt;2)-alpha-D-Man-(1-&gt;3)-[alpha-D-Man-(1-&gt;2)-alpha-D-Man-(1-&gt;3)-[alpha-D-Man-(1-&gt;2)-alpha-D-Man-(1-&gt;6)]-alpha-D-Man-(1-&gt;6)]-beta-D-Man-(1-&gt;4)-beta-D-GlcNAc-(1-&gt;4)-beta-D-GlcNAc)-L-asparaginyl-[protein] + H2O = N(4)-(alpha-D-Glc-(1-&gt;3)-alpha-D-Glc-(1-&gt;3)-alpha-D-Man-(1-&gt;2)-alpha-D-Man-(1-&gt;2)-alpha-D-Man-(1-&gt;3)-[alpha-D-Man-(1-&gt;2)-alpha-D-Man-(1-&gt;3)-[alpha-D-Man-(1-&gt;2)-alpha-D-Man-(1-&gt;6)]-alpha-D-Man-(1-&gt;6)]-beta-D-Man-(1-&gt;4)-beta-D-GlcNAc-(1-&gt;4)-beta-D-GlcNAc)-L-asparaginyl-[protein] + beta-D-glucose. Functionally, cleaves the distal alpha 1,2-linked glucose residue from the Glc(3)Man(9)GlcNAc(2) oligosaccharide precursor highly specifically. This Schizosaccharomyces pombe (strain 972 / ATCC 24843) (Fission yeast) protein is Probable mannosyl-oligosaccharide glucosidase.